The chain runs to 168 residues: Ribosome maturation factor RimP (168 aa).

This sequence belongs to the RimP family.

The protein localises to the cytoplasm. Its function is as follows. Required for maturation of 30S ribosomal subunits. The polypeptide is Ribosome maturation factor RimP (Rickettsia bellii (strain OSU 85-389)).